Reading from the N-terminus, the 104-residue chain is Pyrimidine/purine nucleoside phosphorylase (104 aa).

It belongs to the nucleoside phosphorylase PpnP family.

It catalyses the reaction a purine D-ribonucleoside + phosphate = a purine nucleobase + alpha-D-ribose 1-phosphate. It carries out the reaction adenosine + phosphate = alpha-D-ribose 1-phosphate + adenine. The catalysed reaction is cytidine + phosphate = cytosine + alpha-D-ribose 1-phosphate. The enzyme catalyses guanosine + phosphate = alpha-D-ribose 1-phosphate + guanine. It catalyses the reaction inosine + phosphate = alpha-D-ribose 1-phosphate + hypoxanthine. It carries out the reaction thymidine + phosphate = 2-deoxy-alpha-D-ribose 1-phosphate + thymine. The catalysed reaction is uridine + phosphate = alpha-D-ribose 1-phosphate + uracil. The enzyme catalyses xanthosine + phosphate = alpha-D-ribose 1-phosphate + xanthine. Catalyzes the phosphorolysis of diverse nucleosides, yielding D-ribose 1-phosphate and the respective free bases. Can use uridine, adenosine, guanosine, cytidine, thymidine, inosine and xanthosine as substrates. Also catalyzes the reverse reactions. The polypeptide is Pyrimidine/purine nucleoside phosphorylase (Pelobacter propionicus (strain DSM 2379 / NBRC 103807 / OttBd1)).